Here is a 461-residue protein sequence, read N- to C-terminus: Alcaligin biosynthesis enzyme (461 aa).

9 to 15 lines the FAD pocket; it reads VAIGIGP.

This sequence belongs to the lysine N(6)-hydroxylase/L-ornithine N(5)-oxygenase family. FAD serves as cofactor.

Its pathway is siderophore biosynthesis; alcaligin biosynthesis. The polypeptide is Alcaligin biosynthesis enzyme (alcA) (Bordetella parapertussis (strain 12822 / ATCC BAA-587 / NCTC 13253)).